Consider the following 268-residue polypeptide: LOB domain-containing protein 13 (268 aa).

The LOB domain maps to 51–152; it reads TPCAACKLLR…SELTTVRTEI (102 aa). The tract at residues 191–268 is disordered; sequence LLPPPPPPPP…SSDNNVHYFD (78 aa). Composition is skewed to pro residues over residues 192-205 and 212-222; these read LPPPPPPPPTPRPP and PAPPPTPPVSL. A compositionally biased stretch (low complexity) spans 223 to 243; it reads PSPSMVVSSSSSSNSSATNSM. Residues 250–268 show a composition bias toward polar residues; the sequence is STAGYSNSLSSDNNVHYFD.

It belongs to the LOB domain-containing protein family. As to expression, expressed in shoots and roots and at low levels in flowers, but not in leaves or inflorescence stems.

The polypeptide is LOB domain-containing protein 13 (LBD13) (Arabidopsis thaliana (Mouse-ear cress)).